The sequence spans 379 residues: 3-dehydroquinate synthase (379 aa).

NAD(+) contacts are provided by residues 67–72 (SGEKNK), 101–105 (GVVLD), 125–126 (TT), lysine 138, and lysine 147. 3 residues coordinate Zn(2+): glutamate 180, histidine 242, and histidine 258.

The protein belongs to the sugar phosphate cyclases superfamily. Dehydroquinate synthase family. Requires NAD(+) as cofactor. Co(2+) serves as cofactor. Zn(2+) is required as a cofactor.

It localises to the cytoplasm. It catalyses the reaction 7-phospho-2-dehydro-3-deoxy-D-arabino-heptonate = 3-dehydroquinate + phosphate. The protein operates within metabolic intermediate biosynthesis; chorismate biosynthesis; chorismate from D-erythrose 4-phosphate and phosphoenolpyruvate: step 2/7. Catalyzes the conversion of 3-deoxy-D-arabino-heptulosonate 7-phosphate (DAHP) to dehydroquinate (DHQ). The protein is 3-dehydroquinate synthase of Chlamydia abortus (strain DSM 27085 / S26/3) (Chlamydophila abortus).